The primary structure comprises 380 residues: Cytoplasmic protein NCK2 (380 aa).

Threonine 2 bears the N-acetylthreonine mark. The 60-residue stretch at 2–61 (TEEVIVIAKWDYTAQQDQELDIKKNERLWLLDDSKTWWRVRNAANRTGYVPSNYVERKNS) folds into the SH3 1 domain. The disordered stretch occupies residues 79-102 (KTRRKTSARDASPTPSTDAEYPAN). Position 90 is a phosphoserine (serine 90). At threonine 92 the chain carries Phosphothreonine. Serine 94 bears the Phosphoserine mark. Tyrosine 110 carries the post-translational modification Phosphotyrosine. SH3 domains are found at residues 111–170 (DLNI…EEVD) and 195–257 (RVLH…VLSD). In terms of domain architecture, SH2 spans 285–380 (WYYGNVTRHQ…EKLYLVRALQ (96 aa)).

In terms of assembly, interacts with DOCK1, LIMS1 and TGFB1I1. Part of a complex containing PPP1R15B, PP1 and NCK2. Interacts with FASLG. Interacts with AXL. Interacts with PAK1, PKN2 and SOS1. Interacts (via SH2 domain) with EGFR. Interacts (via SH2 domain) with DDR1. Interacts with IRS1. Post-translationally, phosphorylated. As to expression, ubiquitous.

The protein resides in the cytoplasm. It localises to the endoplasmic reticulum. Functionally, adapter protein which associates with tyrosine-phosphorylated growth factor receptors or their cellular substrates. Maintains low levels of EIF2S1 phosphorylation by promoting its dephosphorylation by PP1. Plays a role in ELK1-dependent transcriptional activation in response to activated Ras signaling. In Homo sapiens (Human), this protein is Cytoplasmic protein NCK2 (NCK2).